A 694-amino-acid polypeptide reads, in one-letter code: Elongation factor G 2 (694 aa).

Residues 8–282 (TAIRNIGIMA…AVVSYLPSPL (275 aa)) enclose the tr-type G domain. GTP is bound by residues 17-24 (AHIDAGKT), 81-85 (DTPGH), and 135-138 (NKMD).

The protein belongs to the TRAFAC class translation factor GTPase superfamily. Classic translation factor GTPase family. EF-G/EF-2 subfamily.

It is found in the cytoplasm. Catalyzes the GTP-dependent ribosomal translocation step during translation elongation. During this step, the ribosome changes from the pre-translocational (PRE) to the post-translocational (POST) state as the newly formed A-site-bound peptidyl-tRNA and P-site-bound deacylated tRNA move to the P and E sites, respectively. Catalyzes the coordinated movement of the two tRNA molecules, the mRNA and conformational changes in the ribosome. The polypeptide is Elongation factor G 2 (Syntrophomonas wolfei subsp. wolfei (strain DSM 2245B / Goettingen)).